A 130-amino-acid chain; its full sequence is Small ribosomal subunit protein uS9 (130 aa).

This sequence belongs to the universal ribosomal protein uS9 family.

This chain is Small ribosomal subunit protein uS9, found in Geobacillus thermodenitrificans (strain NG80-2).